The primary structure comprises 334 residues: MALTMLLLLVAAALTLIETRAGQHSLQYFHTAVSRPGLGEPWFISVGYVDDTQFVRFDSDAENPRMEPRARWMEQEGPEYWERETQIAKGHEQSFRGSLRTAQSYYNQSKGGSHTLQWMYGCDMGSDGRLLRGYLQFAYEGRDYIALNEDLKTWTAVDMAAQITRRKWEQAGIAEKDQAYLEGTCMQSLRRYLQLGKETLLRTDPPKAHVTHHPRSYGAVTLRCWALGFYPADITLTWQLNGEELTQDMELVETRPAGDGTFQKWASVVVPLGKEQNYTCHVNHEGLPEPLTLRWGRWEPPPYTVSNMATIAVVVDLGAVAIIGAVVAFVMNRR.

An N-terminal signal peptide occupies residues 1 to 21 (MALTMLLLLVAAALTLIETRA). The alpha-1 stretch occupies residues 22 to 111 (GQHSLQYFHT…AQSYYNQSKG (90 aa)). The Extracellular segment spans residues 22-310 (GQHSLQYFHT…PPYTVSNMAT (289 aa)). The N-linked (GlcNAc...) asparagine glycan is linked to Asn107. The segment at 112–203 (GSHTLQWMYG…QLGKETLLRT (92 aa)) is alpha-2. 2 disulfide bridges follow: Cys122-Cys185 and Cys224-Cys280. The interval 204–295 (DPPKAHVTHH…GLPEPLTLRW (92 aa)) is alpha-3. The Ig-like C1-type domain maps to 206–294 (PKAHVTHHPR…EGLPEPLTLR (89 aa)). N-linked (GlcNAc...) asparagine glycosylation is present at Asn277. A connecting peptide region spans residues 296–310 (GRWEPPPYTVSNMAT). The chain crosses the membrane as a helical span at residues 311–332 (IAVVVDLGAVAIIGAVVAFVMN).

Belongs to the MHC class I family. In terms of assembly, heterodimer of an alpha chain and a beta chain (beta-2-microglobulin).

Its subcellular location is the membrane. In terms of biological role, involved in the presentation of foreign antigens to the immune system. This is H-2 class I histocompatibility antigen, Q7 alpha chain (H2-Q7) from Mus musculus (Mouse).